The primary structure comprises 234 residues: tRNA (guanine-N(1)-)-methyltransferase (234 aa).

Gly-113 is a binding site for S-adenosyl-L-methionine.

The protein belongs to the RNA methyltransferase TrmD family. As to quaternary structure, homodimer.

The protein resides in the cytoplasm. It carries out the reaction guanosine(37) in tRNA + S-adenosyl-L-methionine = N(1)-methylguanosine(37) in tRNA + S-adenosyl-L-homocysteine + H(+). In terms of biological role, specifically methylates guanosine-37 in various tRNAs. The sequence is that of tRNA (guanine-N(1)-)-methyltransferase from Gluconobacter oxydans (strain 621H) (Gluconobacter suboxydans).